We begin with the raw amino-acid sequence, 347 residues long: Phosphoribosylformylglycinamidine cyclo-ligase (347 aa).

Belongs to the AIR synthase family.

The protein resides in the cytoplasm. It carries out the reaction 2-formamido-N(1)-(5-O-phospho-beta-D-ribosyl)acetamidine + ATP = 5-amino-1-(5-phospho-beta-D-ribosyl)imidazole + ADP + phosphate + H(+). It participates in purine metabolism; IMP biosynthesis via de novo pathway; 5-amino-1-(5-phospho-D-ribosyl)imidazole from N(2)-formyl-N(1)-(5-phospho-D-ribosyl)glycinamide: step 2/2. In Syntrophus aciditrophicus (strain SB), this protein is Phosphoribosylformylglycinamidine cyclo-ligase.